The sequence spans 478 residues: Putative L-amino-acid oxidase YobN (478 aa).

Residues serine 34, glutamate 53, arginine 61, and methionine 80–arginine 81 contribute to the FAD site. Substrate contacts are provided by arginine 81 and tyrosine 369. FAD-binding positions include glutamate 451 and methionine 460–alanine 463.

The protein belongs to the flavin monoamine oxidase family. FIG1 subfamily. Requires FAD as cofactor.

The enzyme catalyses an L-alpha-amino acid + O2 + H2O = a 2-oxocarboxylate + H2O2 + NH4(+). The protein is Putative L-amino-acid oxidase YobN (yobN) of Bacillus subtilis (strain 168).